The following is a 319-amino-acid chain: ATP-dependent 6-phosphofructokinase (319 aa).

Residue Gly-11 coordinates ATP. An ADP-binding site is contributed by Arg-21–Arg-25. ATP is bound by residues Arg-72–Tyr-73 and Gly-102–Ser-105. Residue Asp-103 coordinates Mg(2+). Thr-125–Asp-127 is a substrate binding site. Asp-127 (proton acceptor) is an active-site residue. Arg-154 provides a ligand contact to ADP. Substrate is bound by residues Arg-162 and Met-169–Arg-171. Residues Gly-185 to Glu-187, Arg-211, and Lys-213 to His-215 each bind ADP. Residues Glu-222, Arg-243, and His-249 to Arg-252 each bind substrate.

The protein belongs to the phosphofructokinase type A (PFKA) family. ATP-dependent PFK group I subfamily. Prokaryotic clade 'B1' sub-subfamily. In terms of assembly, homotetramer. The cofactor is Mg(2+).

It is found in the cytoplasm. The enzyme catalyses beta-D-fructose 6-phosphate + ATP = beta-D-fructose 1,6-bisphosphate + ADP + H(+). It participates in carbohydrate degradation; glycolysis; D-glyceraldehyde 3-phosphate and glycerone phosphate from D-glucose: step 3/4. With respect to regulation, allosterically activated by ADP and other diphosphonucleosides, and allosterically inhibited by phosphoenolpyruvate. Its function is as follows. Catalyzes the phosphorylation of D-fructose 6-phosphate to fructose 1,6-bisphosphate by ATP, the first committing step of glycolysis. The protein is ATP-dependent 6-phosphofructokinase of Listeria welshimeri serovar 6b (strain ATCC 35897 / DSM 20650 / CCUG 15529 / CIP 8149 / NCTC 11857 / SLCC 5334 / V8).